Reading from the N-terminus, the 117-residue chain is MTFEMLYSKIHRATITDANLNYIGSITIDEDLAKLAKLREGMKVEIVDVNNGERFSTYVILGKKRGKICVNGAAARKVAIGDVVIILAYASMNEDEINTHKPSIVLVDEKNEILEKG.

Ser25 acts as the Schiff-base intermediate with substrate; via pyruvic acid in catalysis. Ser25 bears the Pyruvic acid (Ser) mark. Thr57 serves as a coordination point for substrate. Tyr58 acts as the Proton donor in catalysis. Residue 72–74 (GAA) participates in substrate binding.

This sequence belongs to the PanD family. Heterooctamer of four alpha and four beta subunits. It depends on pyruvate as a cofactor. Is synthesized initially as an inactive proenzyme, which is activated by self-cleavage at a specific serine bond to produce a beta-subunit with a hydroxyl group at its C-terminus and an alpha-subunit with a pyruvoyl group at its N-terminus.

The protein localises to the cytoplasm. The enzyme catalyses L-aspartate + H(+) = beta-alanine + CO2. Its pathway is cofactor biosynthesis; (R)-pantothenate biosynthesis; beta-alanine from L-aspartate: step 1/1. Its function is as follows. Catalyzes the pyruvoyl-dependent decarboxylation of aspartate to produce beta-alanine. In Helicobacter pylori (strain J99 / ATCC 700824) (Campylobacter pylori J99), this protein is Aspartate 1-decarboxylase.